We begin with the raw amino-acid sequence, 901 residues long: MTTQLNINSVIENAKRVITPLSPISIFAARNPWEGLEADTFEDVAKWLRDVRDVDIFPNKALIESAVARGELDESVFNQLVTDMLLEHHYNIPQHYINLYIDNIKTLKDVPASYMNHSNVDVVADLLLEKSKRDMAESYHHYDVRPMSDAIIDEQGEPLSEQVNRQMIKWTKLYIDQFLSSWTMPKREQSFYHAWLHLAQHDHSFTKAQRQVIKGLPNDPEMTIESVLTYFSIDQEDYQAYVEGHLLALPGWAGMLYYRSQQHHFEQHLLTDYLAIRLVVEQLLVGDEFKSVTKDCESRSENWFKQTVASLCYYSDMPSDVLLQHDVNEIQTFIHFAATMNKNVFKNLWLIAWEMTYESQLKQKIKAGHESVAGALDVNQVNVSENDNANQPHSVLLNDTQAVDENNSELNQVGTSTKAQIAFCIDVRSEPFRRHIEAAGPFETIGIAGFFGLPIQKDAVDEQFKHDSLPVMVPPAYRIKEFADRYDMNVYRQQQQTMSSMFYTFKLMKNNVMPSLLLPELSGPFLSLSTIVNSIMPRKSRASLQKIKQKWLKKPETKLTIDREFDRTSDLPVGFTEQEQIDFALQALKLMDLTEAFAPFVVLAGHASHSHNNPHHASLECGACGGASSGFNAKLLAMICNRPNVRQGLKQSGVYIPETTVFAAAEHHTSTDTLAWVYVPDTLSALALDAYESLNDAMPMISEQANRERLDKLPTIGRVNHPVEEAQRFASDWSEVRPEWGLAKNASFIIGRRQLTKGIDLEGRTFLHNYDWRKDKDGKLLNTIISGPALVAQWINLQYYASTVAPHFYGSGNKATQTVTSGVGVMQGNASDLMYGLSWQSVMAADRTMYHSPIRLLVVIQAPDYVVARLFANNEHFARKVSNHWLRLMSVNEEGRFKSWI.

Zn(2+) contacts are provided by Cys424, Asp426, His606, and Cys621.

Belongs to the inorganic carbon transporter (TC 9.A.2) DabA family. Forms a complex with DabB. The cofactor is Zn(2+).

The protein localises to the cell membrane. Its function is as follows. Part of an energy-coupled inorganic carbon pump. This chain is Probable inorganic carbon transporter subunit DabA, found in Staphylococcus aureus (strain Mu3 / ATCC 700698).